A 444-amino-acid chain; its full sequence is CBL-interacting serine/threonine-protein kinase 1 (444 aa).

One can recognise a Protein kinase domain in the interval 20 to 275 (YELGRTLGEG…VVGIKASEWF (256 aa)). Residues 26–34 (LGEGNFGKV) and lysine 49 contribute to the ATP site. The Proton acceptor role is filled by aspartate 143. An activation loop region spans residues 161–190 (DFGLSALPQHFRDDGLLHTTCGSPNYVAPE). Serine 165 is modified (phosphoserine). Threonine 179 carries the phosphothreonine modification. Positions 313–337 (DSPTIINAFQLIGMSSFLDLSGFFE) constitute an NAF domain. The tract at residues 343 to 372 (ERRIRFTSNSSAKDLLEKIETAVTEMGFSV) is PPI.

The protein belongs to the protein kinase superfamily. CAMK Ser/Thr protein kinase family. SNF1 subfamily. Interacts with CBL1. Interacts with CBL2. Interacts with CBL3. Interacts with CBL9. Interacts with ECT1 and ECT2. The cofactor is Mn(2+). Post-translationally, autophosphorylated. As to expression, ubiquitous.

The enzyme catalyses L-seryl-[protein] + ATP = O-phospho-L-seryl-[protein] + ADP + H(+). The catalysed reaction is L-threonyl-[protein] + ATP = O-phospho-L-threonyl-[protein] + ADP + H(+). Functionally, CIPK serine-threonine protein kinases interact with CBL proteins. Binding of a CBL protein to the regulatory NAF domain of CIPK protein lead to the activation of the kinase in a calcium-dependent manner. This chain is CBL-interacting serine/threonine-protein kinase 1 (CIPK1), found in Arabidopsis thaliana (Mouse-ear cress).